The primary structure comprises 881 residues: DNA mismatch repair protein MutS (881 aa).

Residue 605–612 (GPNMSGKS) participates in ATP binding.

The protein belongs to the DNA mismatch repair MutS family.

This protein is involved in the repair of mismatches in DNA. It is possible that it carries out the mismatch recognition step. This protein has a weak ATPase activity. This is DNA mismatch repair protein MutS from Limosilactobacillus reuteri subsp. reuteri (strain JCM 1112) (Lactobacillus reuteri).